A 999-amino-acid chain; its full sequence is Transcription-repair-coupling factor (999 aa).

Positions 499–656 (DLSSHRVMDR…LSQIKGISSL (158 aa)) constitute a Helicase ATP-binding domain. 512 to 519 (GDVGFGKT) lines the ATP pocket. Positions 609-612 (DEEH) match the DEEH box motif. A Helicase C-terminal domain is found at 677–833 (LLKEIIYREL…SVAYHDLEIR (157 aa)).

The protein in the N-terminal section; belongs to the UvrB family. This sequence in the C-terminal section; belongs to the helicase family. RecG subfamily.

The protein localises to the cytoplasm. In terms of biological role, couples transcription and DNA repair by recognizing RNA polymerase (RNAP) stalled at DNA lesions. Mediates ATP-dependent release of RNAP and its truncated transcript from the DNA, and recruitment of nucleotide excision repair machinery to the damaged site. In Helicobacter pylori (strain ATCC 700392 / 26695) (Campylobacter pylori), this protein is Transcription-repair-coupling factor.